Consider the following 571-residue polypeptide: MRTSQYLLATQKETPADAVVISHQLMLRAGMIRKLASGLYTWLPMGLRVMRKVEAVVREEMNAAGALEVLMPSIQPAELWQESGRWEQYGPELLRLKDRHQRDFCVGPTHEEVITDLARNELSSYKQLPLNLYQIQTKFRDEIRPRFGLMRGREFIMKDAYSFHADQASLQETYDRMHQAYSNVFTRLGLDFRPVQADTGSIGGSYSHEFHVLAESGEDDVIFSDSSDYAANIEKAEAIPRETVRPAPTEELRLVDTPNAKTIAQLVENHGLPIEKTVKTLIVRGAEEGKLIALIVRGDHELNEIKATKLEQVADPLVMATEAELRDAIGAGAGSLGPLNLPLEIIIDRSVALMSDFGIGANIDDKHYFGVNWERDLPVPQVADLRNVVEGDPSPDGQGTLVIKRGIEVGHIFQLGTKYSEALKCQVLGENGKPVVLSMGCYGIGVSRVVAAAIEQSYDDKGIIWNDALAPFQIALVPLRYETEVVREATDKLYAELTAAGFEVLLDDRDKKTSPGIKFADMELIGIPHRIVVSDRGLAEGNLEYKHRTEQDAQALPLNEVLTFLQARVRR.

The protein belongs to the class-II aminoacyl-tRNA synthetase family. ProS type 1 subfamily. In terms of assembly, homodimer.

It localises to the cytoplasm. The enzyme catalyses tRNA(Pro) + L-proline + ATP = L-prolyl-tRNA(Pro) + AMP + diphosphate. Functionally, catalyzes the attachment of proline to tRNA(Pro) in a two-step reaction: proline is first activated by ATP to form Pro-AMP and then transferred to the acceptor end of tRNA(Pro). As ProRS can inadvertently accommodate and process non-cognate amino acids such as alanine and cysteine, to avoid such errors it has two additional distinct editing activities against alanine. One activity is designated as 'pretransfer' editing and involves the tRNA(Pro)-independent hydrolysis of activated Ala-AMP. The other activity is designated 'posttransfer' editing and involves deacylation of mischarged Ala-tRNA(Pro). The misacylated Cys-tRNA(Pro) is not edited by ProRS. The polypeptide is Proline--tRNA ligase (Pseudomonas putida (strain ATCC 700007 / DSM 6899 / JCM 31910 / BCRC 17059 / LMG 24140 / F1)).